Here is a 502-residue protein sequence, read N- to C-terminus: Maturase K (502 aa).

It belongs to the intron maturase 2 family. MatK subfamily.

Its subcellular location is the plastid. The protein localises to the chloroplast. In terms of biological role, usually encoded in the trnK tRNA gene intron. Probably assists in splicing its own and other chloroplast group II introns. The chain is Maturase K from Vaccinium vitis-idaea (Mountain cranberry).